Reading from the N-terminus, the 103-residue chain is Small ribosomal subunit protein uS10 (103 aa).

Belongs to the universal ribosomal protein uS10 family. In terms of assembly, part of the 30S ribosomal subunit.

In terms of biological role, involved in the binding of tRNA to the ribosomes. The chain is Small ribosomal subunit protein uS10 from Haemophilus ducreyi (strain 35000HP / ATCC 700724).